A 644-amino-acid chain; its full sequence is Protein FAM149B1 (644 aa).

3 disordered regions span residues 392–490, 551–575, and 609–644; these read NQSD…NTLL, TFRS…RPGR, and GHFP…RPGL. The segment covering 395-404 has biased composition (basic and acidic residues); that stretch reads DCRDSEDKVS. Residues 449–459 are compositionally biased toward polar residues; that stretch reads PITSSVTQPIT. Residues 626–644 show a composition bias toward polar residues; the sequence is QARSHNRGGSTARSSRPGL.

It belongs to the FAM149 family.

The protein is Protein FAM149B1 (fam149b1) of Danio rerio (Zebrafish).